Consider the following 89-residue polypeptide: Small ribosomal subunit protein uS15 (89 aa).

Belongs to the universal ribosomal protein uS15 family. As to quaternary structure, part of the 30S ribosomal subunit. Forms a bridge to the 50S subunit in the 70S ribosome, contacting the 23S rRNA.

One of the primary rRNA binding proteins, it binds directly to 16S rRNA where it helps nucleate assembly of the platform of the 30S subunit by binding and bridging several RNA helices of the 16S rRNA. Its function is as follows. Forms an intersubunit bridge (bridge B4) with the 23S rRNA of the 50S subunit in the ribosome. The protein is Small ribosomal subunit protein uS15 of Frankia alni (strain DSM 45986 / CECT 9034 / ACN14a).